The following is a 211-amino-acid chain: Large ribosomal subunit protein uL3 (211 aa).

The tract at residues 134-155 (ATHGNSLSHRAPGSIGQNQTPG) is disordered. Q152 carries the post-translational modification N5-methylglutamine.

It belongs to the universal ribosomal protein uL3 family. Part of the 50S ribosomal subunit. Forms a cluster with proteins L14 and L19. In terms of processing, methylated by PrmB.

In terms of biological role, one of the primary rRNA binding proteins, it binds directly near the 3'-end of the 23S rRNA, where it nucleates assembly of the 50S subunit. This chain is Large ribosomal subunit protein uL3, found in Methylococcus capsulatus (strain ATCC 33009 / NCIMB 11132 / Bath).